The following is a 251-amino-acid chain: Zwei Ig domain protein zig-3 (251 aa).

A signal peptide spans 1 to 19 (MLLICISVLAAISAHPLSS). Ig-like C2-type domains lie at 42–144 (PSLK…AKIS) and 160–244 (PVIT…TFLY). Intrachain disulfides connect cysteine 65–cysteine 128 and cysteine 181–cysteine 228.

As to expression, expressed in PVT, AIM and ASI neurons, in vulva and weakly in body wall muscles.

Its subcellular location is the secreted. Functionally, required for maintaining axon position of PVQ and PVP neurons postembryonically in the ventral nerve cord (VNC) by preventing axons drifting into the opposite side of the VNC that could occur during body growth and movement. In Caenorhabditis elegans, this protein is Zwei Ig domain protein zig-3.